Consider the following 142-residue polypeptide: Ribosome maturation factor RimP (142 aa).

This sequence belongs to the RimP family.

The protein resides in the cytoplasm. Required for maturation of 30S ribosomal subunits. This chain is Ribosome maturation factor RimP, found in Sulfurovum sp. (strain NBC37-1).